A 345-amino-acid polypeptide reads, in one-letter code: NADPH-dependent oxidoreductase 2-alkenal reductase (345 aa).

NADP(+) is bound by residues 52–53 (PY), 163–169 (AASGAVG), Gly-188, Lys-192, Tyr-208, Asn-232, Cys-254, Tyr-260, 284–286 (FVV), Phe-330, and 334–336 (NVG). Tyr-53 contributes to the substrate binding site. Substrate is bound at residue Tyr-260.

It belongs to the NADP-dependent oxidoreductase L4BD family. As to quaternary structure, homodimer. Expressed in leaves.

The protein localises to the cytoplasm. It localises to the nucleus. It is found in the nucleoplasm. The catalysed reaction is an n-alkanal + NAD(+) = an alk-2-enal + NADH + H(+). The enzyme catalyses an n-alkanal + NADP(+) = an alk-2-enal + NADPH + H(+). Inhibited by N-ethylmaleimide and p-chloromercuribenzoic acid. Functionally, involved in the detoxification of reactive carbonyls. Acts on lipid peroxide-derived reactive aldehydes. Specific to a double bond activated by an adjacent carbonyl group. Can use both quinones and diamide as substrates, but not menadione, ferricyanide or phylloquinone. Can use 4-hydroxy-(2E)-nonenal (HNE), 4-hydroxy-(2E)-hexenal (HHE), (2E)-nonenal, (2E)-hexenal, (2E)-pentenal, propenal (acrolein), 3-buten-2-one and 3-penten-2-one, but not (R)-(-)-carvone, n-nonanal, n-hexanal, (3Z)-hexanal, cyclohex-2-en-1-one or 12-oxo phytodienoic acid (OPDA) as electron acceptors. Catalyzes the reduction of the alpha,beta-unsaturated bond of 2-alkenals, of lipid peroxide-derived oxenes 9-oxo-10(E),12(Z)-octadecadienoic acid (9-KODE) and 13-oxo-9(Z),11(E)-octadecadienoic acid (13-KODE), as well as 4-oxo-(2E)-nonenal and 4-hydroxynonenal. Can use 12-oxo-10(E) dodecanoate (traumatin), trans-1,3 diphenyl-2-propenone, trans-1,4-diphenyl-2-butene-1,4-dione, 9-oxo-12,13-epoxy-(10E)-octadecenoic acid (trans-EKODE-1b) and 9,13-dihydroxy-10-oxo-11-octadecenoic acid as substrates. Catalyzes the reduction of the 7-8 double bond of phenylpropanal substrates, such as p-coumaryl aldehyde and coniferyl aldehyde (in vitro). Has activity towards toxic substrates, such as 4-hydroxy-(2E)-nonenal (in vitro). May play a distinct role in plant antioxidant defense and is possibly involved in NAD(P)/NAD(P)H homeostasis. This Arabidopsis thaliana (Mouse-ear cress) protein is NADPH-dependent oxidoreductase 2-alkenal reductase.